The following is a 352-amino-acid chain: Rhodopsin (352 aa).

The Extracellular portion of the chain corresponds to 1–36 (MNGTEGPDFYIPFSNKTGVVRSPFEYPQYYLAEPWK). Residues Asn-2 and Asn-15 are each glycosylated (N-linked (GlcNAc...) asparagine). A helical transmembrane segment spans residues 37 to 61 (YSALAAYMFMLIILGFPINFLTLYV). The Cytoplasmic segment spans residues 62–73 (TVQHKKLRSPLN). A helical membrane pass occupies residues 74–96 (YILLNLAVADLFMVLGGFTTTLY). The Extracellular segment spans residues 97–110 (TSMNGYFVFGVTGC). An intrachain disulfide couples Cys-110 to Cys-187. Residues 111 to 133 (YFEGFFATLGGEVALWCLVVLAI) traverse the membrane as a helical segment. Residues 134–136 (ERY) carry the 'Ionic lock' involved in activated form stabilization motif. Residues 134–152 (ERYIVVCKPMSNFRFGENH) lie on the Cytoplasmic side of the membrane. The chain crosses the membrane as a helical span at residues 153-173 (AIMGVVFTWIMALTCAAPPLV). At 174–202 (GWSRYIPEGMQCSCGVDYYTLKPEVNNES) the chain is on the extracellular side. Residues 203-224 (FVIYMFVVHFAIPLAVIFFCYG) form a helical membrane-spanning segment. The Cytoplasmic segment spans residues 225–252 (RLVCTVKEAAAQQQESATTQKAEKEVTR). A helical membrane pass occupies residues 253–274 (MVIIMVVSFLICWVPYASVAFY). Residues 275 to 286 (IFSNQGSDFGPV) lie on the Extracellular side of the membrane. A helical membrane pass occupies residues 287–308 (FMTIPAFFAKSSAIYNPVIYIV). The residue at position 296 (Lys-296) is an N6-(retinylidene)lysine. Topologically, residues 309 to 352 (MNKQFRNCMITTLCCGKNPLGDDETATGSKTETSSVSTSQVSPA) are cytoplasmic. 2 S-palmitoyl cysteine lipidation sites follow: Cys-322 and Cys-323. The disordered stretch occupies residues 332 to 352 (ETATGSKTETSSVSTSQVSPA). Residues 335–352 (TGSKTETSSVSTSQVSPA) are compositionally biased toward low complexity.

This sequence belongs to the G-protein coupled receptor 1 family. Opsin subfamily. Contains one covalently linked retinal chromophore. Upon light absorption, the covalently bound 11-cis-retinal is converted to all-trans-retinal. After hydrolysis of the Schiff base and release of the covalently bound all-trans-retinal, active rhodopsin is regenerated by binding of a fresh molecule of 11-cis-retinal. As to expression, expressed in rod-shaped photoreceptor cells in the retina that mediate vision in dim ligh (at protein level).

The protein resides in the membrane. It localises to the cell projection. The protein localises to the cilium. Its subcellular location is the photoreceptor outer segment. Its function is as follows. Photoreceptor required for image-forming vision at low light intensity. Required for photoreceptor cell viability after birth. Light-induced isomerization of 11-cis to all-trans retinal triggers a conformational change that activates signaling via G-proteins. Subsequent receptor phosphorylation mediates displacement of the bound G-protein alpha subunit by arrestin and terminates signaling. This is Rhodopsin (RHO) from Alligator mississippiensis (American alligator).